A 607-amino-acid chain; its full sequence is Cytosolic Fe-S cluster assembly factor NAR1 (607 aa).

The [4Fe-4S] cluster site is built by Cys-20, Cys-82, Cys-85, Cys-88, Cys-204, and Cys-259. A disordered region spans residues 430 to 476 (KPNTGKSTNTTTTTTKSKVNPLAARRRARIANNRGKPETKSTSEVNS). The segment covering 432-447 (NTGKSTNTTTTTTKSK) has biased composition (low complexity). The [4Fe-4S] cluster site is built by Cys-496 and Cys-500.

Belongs to the NARF family.

Functionally, component of the cytosolic Fe/S protein assembly machinery. Required for maturation of extramitochondrial Fe/S proteins. May play a role in the transfer of pre-assembled Fe/S clusters to target apoproteins. This Candida albicans (strain SC5314 / ATCC MYA-2876) (Yeast) protein is Cytosolic Fe-S cluster assembly factor NAR1 (NAR1).